The following is a 480-amino-acid chain: Cytochrome b-c1 complex subunit 1, mitochondrial (480 aa).

Residues 1 to 34 (MAASVVCRAATAGAQVLLRARRSPALLRTPALRS) constitute a mitochondrion transit peptide. K111 and K138 each carry N6-acetyllysine. K163 is subject to N6-acetyllysine; alternate. An N6-succinyllysine; alternate modification is found at K163. The residue at position 212 (S212) is a Phosphoserine. At K248 the chain carries N6-acetyllysine.

It belongs to the peptidase M16 family. UQCRC1/QCR1 subfamily. In terms of assembly, component of the ubiquinol-cytochrome c oxidoreductase (cytochrome b-c1 complex, complex III, CIII), a multisubunit enzyme composed of 11 subunits. The complex is composed of 3 respiratory subunits cytochrome b, cytochrome c1 and Rieske protein UQCRFS1, 2 core protein subunits UQCRC1/QCR1 and UQCRC2/QCR2, and 6 low-molecular weight protein subunits UQCRH/QCR6, UQCRB/QCR7, UQCRQ/QCR8, UQCR10/QCR9, UQCR11/QCR10 and subunit 9, the cleavage product of Rieske protein UQCRFS1. The complex exists as an obligatory dimer and forms supercomplexes (SCs) in the inner mitochondrial membrane with NADH-ubiquinone oxidoreductase (complex I, CI) and cytochrome c oxidase (complex IV, CIV), resulting in different assemblies (supercomplex SCI(1)III(2)IV(1) and megacomplex MCI(2)III(2)IV(2)). Interacts with UQCC6. Interacts with STMP1. In terms of tissue distribution, expressed in brain, including substantia nigra, striatum, cortex and cerebellum, and in spinal cord, heart, kidney, liver and muscle.

The protein resides in the mitochondrion inner membrane. Component of the ubiquinol-cytochrome c oxidoreductase, a multisubunit transmembrane complex that is part of the mitochondrial electron transport chain which drives oxidative phosphorylation. The respiratory chain contains 3 multisubunit complexes succinate dehydrogenase (complex II, CII), ubiquinol-cytochrome c oxidoreductase (cytochrome b-c1 complex, complex III, CIII) and cytochrome c oxidase (complex IV, CIV), that cooperate to transfer electrons derived from NADH and succinate to molecular oxygen, creating an electrochemical gradient over the inner membrane that drives transmembrane transport and the ATP synthase. The cytochrome b-c1 complex catalyzes electron transfer from ubiquinol to cytochrome c, linking this redox reaction to translocation of protons across the mitochondrial inner membrane, with protons being carried across the membrane as hydrogens on the quinol. In the process called Q cycle, 2 protons are consumed from the matrix, 4 protons are released into the intermembrane space and 2 electrons are passed to cytochrome c. The 2 core subunits UQCRC1/QCR1 and UQCRC2/QCR2 are homologous to the 2 mitochondrial-processing peptidase (MPP) subunits beta-MPP and alpha-MPP respectively, and they seem to have preserved their MPP processing properties. May be involved in the in situ processing of UQCRFS1 into the mature Rieske protein and its mitochondrial targeting sequence (MTS)/subunit 9 when incorporated into complex III. Seems to play an important role in the maintenance of proper mitochondrial function in nigral dopaminergic neurons. The sequence is that of Cytochrome b-c1 complex subunit 1, mitochondrial (UQCRC1) from Homo sapiens (Human).